Reading from the N-terminus, the 574-residue chain is Sodium/hydrogen exchanger 8 (574 aa).

The next 11 helical transmembrane spans lie at 53–73 (MTIF…HLLI), 77–97 (LHFL…GAFI), 116–136 (PNMF…YSLH), 149–169 (LFSV…IYFL), 184–204 (FAFG…IFNA), 254–274 (LGYF…TGLI), 304–324 (GLAE…GIVM), 347–367 (VAFM…FSFP), 373–393 (SFVI…IFPL), 410–430 (MFIM…SLHL), and 444–464 (TTII…MPLI).

The protein belongs to the monovalent cation:proton antiporter 1 (CPA1) transporter (TC 2.A.36) family.

Its subcellular location is the golgi apparatus membrane. Its function is as follows. Involved in pH regulation to eliminate acids generated by active metabolism or to counter adverse environmental conditions. Major proton extruding system driven by the inward sodium ion chemical gradient. Plays an important role in signal transduction. The sequence is that of Sodium/hydrogen exchanger 8 from Gallus gallus (Chicken).